The chain runs to 362 residues: Sterol-4-alpha-carboxylate 3-dehydrogenase, decarboxylating (362 aa).

The residue at position 1 (Met-1) is an N-acetylmethionine. Tyr-161 (proton acceptor) is an active-site residue. Residue Lys-165 participates in NAD(+) binding. A helical transmembrane segment spans residues 287–307; it reads WMAYYLAFLLSLLVMVVSPLI. The Prevents secretion from ER motif lies at 359–362; that stretch reads RKDK.

It belongs to the 3-beta-HSD family. In terms of assembly, homodimer.

The protein localises to the endoplasmic reticulum membrane. It localises to the lipid droplet. It carries out the reaction a 3beta-hydroxysteroid-4alpha-carboxylate + NADP(+) = a 3-oxosteroid + CO2 + NADPH. The catalysed reaction is a 3beta-hydroxysteroid-4alpha-carboxylate + NAD(+) = a 3-oxosteroid + CO2 + NADH. It catalyses the reaction 4alpha-carboxyzymosterol + NADP(+) = zymosterone + CO2 + NADPH. The enzyme catalyses 4alpha-carboxy-4beta-methyl-5alpha-cholest-8-en-3beta-ol + NADP(+) = 4alpha-methyl-5alpha-cholest-8-en-3-one + CO2 + NADPH. It carries out the reaction 4alpha-carboxy-5alpha-cholest-8-ene-3beta-ol + NADP(+) = 5alpha-cholest-8-en-3-one + CO2 + NADPH. The catalysed reaction is 4beta-methylzymosterol-4alpha-carboxylate + NADP(+) = 3-dehydro-4-methylzymosterol + CO2 + NADPH. It catalyses the reaction 4beta-methylzymosterol-4alpha-carboxylate + NAD(+) = 3-dehydro-4-methylzymosterol + CO2 + NADH. The enzyme catalyses 4alpha-carboxy-5alpha-cholest-8-ene-3beta-ol + NAD(+) = 5alpha-cholest-8-en-3-one + CO2 + NADH. It carries out the reaction 4alpha-carboxy-4beta-methyl-5alpha-cholest-8-en-3beta-ol + NAD(+) = 4alpha-methyl-5alpha-cholest-8-en-3-one + CO2 + NADH. The catalysed reaction is 4alpha-carboxyzymosterol + NAD(+) = zymosterone + CO2 + NADH. It participates in steroid biosynthesis; zymosterol biosynthesis; zymosterol from lanosterol: step 4/6. Catalyzes the NAD(P)(+)-dependent oxidative decarboxylation of the C4 methyl groups of 4-alpha-carboxysterols in post-squalene cholesterol biosynthesis. Plays a role in the regulation of the endocytic trafficking of EGFR. This chain is Sterol-4-alpha-carboxylate 3-dehydrogenase, decarboxylating (Nsdhl), found in Mus musculus (Mouse).